Here is a 544-residue protein sequence, read N- to C-terminus: MFS-type transporter prx5 (544 aa).

Positions 1-28 (MAVDTEKDSVQAGSPMETPGSPVDETTE) are disordered. The next 13 membrane-spanning stretches (helical) occupy residues 36-56 (WIVSMILSCGYGLSFWPIPVV), 90-110 (LDHLCFLDLVCFIGHIVVASA), 116-136 (VIAGLVVSGFGGANCQMAAFA), 148-168 (IGVVIADLTVYIAVIIAPVTA), 178-198 (AWNFWGVAIFQGLSFFGLLFL), 221-241 (GAFLFIGGAVPFLMGIVWAGV), 249-269 (VVAPLVVGAAVLVCFALWESF), 290-310 (FTAPVIALGVVNMFYYSSSIL), 330-350 (VILSLPQGFAIFFGAMLLTCF), 361-381 (LTGSVFVMVVFGSLLGIVTPT), 387-407 (IAFIFLSQAGFGWALYLSIAI), 418-438 (GVSGGISGCIRFAAGAVATSI), and 505-525 (AIFVVAMVSMAFGILGLAACL).

The protein belongs to the major facilitator superfamily.

It localises to the cell membrane. Its function is as follows. MFS-type transporter; part of the gene cluster that mediates the biosynthesis of PR-toxin, a bicyclic sesquiterpene belonging to the eremophilane class and acting as a mycotoxin. In Penicillium rubens (strain ATCC 28089 / DSM 1075 / NRRL 1951 / Wisconsin 54-1255) (Penicillium chrysogenum), this protein is MFS-type transporter prx5.